The following is a 281-amino-acid chain: 2-dehydro-3-deoxyphosphooctonate aldolase (281 aa).

It belongs to the KdsA family.

It is found in the cytoplasm. The enzyme catalyses D-arabinose 5-phosphate + phosphoenolpyruvate + H2O = 3-deoxy-alpha-D-manno-2-octulosonate-8-phosphate + phosphate. The protein operates within carbohydrate biosynthesis; 3-deoxy-D-manno-octulosonate biosynthesis; 3-deoxy-D-manno-octulosonate from D-ribulose 5-phosphate: step 2/3. It functions in the pathway bacterial outer membrane biogenesis; lipopolysaccharide biosynthesis. The sequence is that of 2-dehydro-3-deoxyphosphooctonate aldolase from Pseudomonas paraeruginosa (strain DSM 24068 / PA7) (Pseudomonas aeruginosa (strain PA7)).